Consider the following 1501-residue polypeptide: 1-phosphatidylinositol 4,5-bisphosphate phosphodiesterase eta-2 (1501 aa).

Residues 28–47 (RGFSGLQGGRRRGRGEKGIP) form a disordered region. Residues 75-229 (MPGPQPSAAS…WVTGLRYLMA (155 aa)) form a necessary for plasma membrane localization region. In terms of domain architecture, PH spans 121–229 (SAMQEGTQMV…WVTGLRYLMA (109 aa)). 2 EF-hand domains span residues 243–278 (TRDQ…LNVN) and 279–315 (LPRQ…MSTR). Ca(2+)-binding residues include Asp256, Asn258, Asp260, Ser262, and Glu267. The 146-residue stretch at 400-545 (QDMTQPLSHY…LKGKILVKGK (146 aa)) folds into the PI-PLC X-box domain. The active site involves His415. 3 residues coordinate Ca(2+): Asn416, Glu445, and Asp447. The active site involves His459. Ca(2+) is bound at residue Glu494. Positions 543 and 545 each coordinate substrate. 2 disordered regions span residues 551–570 (ISED…DEME) and 609–700 (DPND…QKKT). Residues 553 to 570 (EDAEEGEVSDEDSADEME) show a composition bias toward acidic residues. Ser561 and Ser565 each carry phosphoserine. Basic and acidic residues predominate over residues 626–638 (RKAEAKKGQSKVE). A compositionally biased stretch (basic residues) spans 662–673 (SKRKKKGSKIKK). 2 positions are modified to phosphoserine: Ser676 and Ser686. Residues 707 to 821 (LSDLVKYTKS…GYVLKPQCMC (115 aa)) form the PI-PLC Y-box domain. The substrate site is built by Ser734 and Arg761. In terms of domain architecture, C2 spans 821-950 (CQGVFNPNSE…PGYRHVYLEG (130 aa)). Residues Ile865, Asp867, Asp891, Asp920, His921, and Asp922 each contribute to the Ca(2+) site. Disordered stretches follow at residues 986–1073 (GSLD…RLFP), 1089–1238 (EEPA…SSND), 1273–1305 (SAAR…DELQ), and 1398–1469 (GDIT…GACS). Low complexity predominate over residues 1089 to 1107 (EEPALGPGLPLQAAAPTGP). 2 stretches are compositionally biased toward basic and acidic residues: residues 1142-1151 (GGRENEEPPL) and 1215-1227 (LWQR…HRDS). The span at 1421-1439 (RRSSSRSQSRVRAIASRAR) shows a compositional bias: low complexity. Over residues 1440–1463 (QAQERQQRLRGQDSRGPPEEERGT) the composition is skewed to basic and acidic residues.

Requires Ca(2+) as cofactor. Specifically detected in the brain, with higher level in cerebral cortex, olfactory bulb and hippocampus (at protein level). Expressed in the pyramidal cells of the hippocampus, but also in eye and lung.

The protein localises to the cytoplasm. The protein resides in the cell membrane. It catalyses the reaction a 1,2-diacyl-sn-glycero-3-phospho-(1D-myo-inositol-4,5-bisphosphate) + H2O = 1D-myo-inositol 1,4,5-trisphosphate + a 1,2-diacyl-sn-glycerol + H(+). Activity is stimulated by GNB1:GNG2. Its function is as follows. The production of the second messenger molecules diacylglycerol (DAG) and inositol 1,4,5-trisphosphate (IP3) is mediated by activated phosphatidylinositol-specific phospholipase C enzymes. This phospholipase activity is very sensitive to calcium. May be important for formation and maintenance of the neuronal network in the postnatal brain. This chain is 1-phosphatidylinositol 4,5-bisphosphate phosphodiesterase eta-2, found in Mus musculus (Mouse).